The following is a 792-amino-acid chain: Kinesin-related protein 2 (792 aa).

2 disordered regions span residues 22-50 (TINS…PPST) and 162-183 (NNIN…SPVQ). A compositionally biased stretch (polar residues) spans 34–50 (ASSSSQSNDRISYPPST). A coiled-coil region spans residues 284–423 (RLSLSIQDIK…LEKSRSDEKV (140 aa)). The region spanning 437-781 (NIRVFCRIRP…LRFAAKVNSC (345 aa)) is the Kinesin motor domain. 528–535 (GQTGSGKT) is a binding site for ATP.

This sequence belongs to the TRAFAC class myosin-kinesin ATPase superfamily. Kinesin family. NCD subfamily.

The protein resides in the nucleus. The protein localises to the cytoplasm. It is found in the cytoskeleton. It localises to the spindle. Microtubule-dependent motor that is probably involved in microtubule organization in the mitotic spindle. This is Kinesin-related protein 2 (kif2) from Dictyostelium discoideum (Social amoeba).